Here is a 265-residue protein sequence, read N- to C-terminus: Hydroxyethylthiazole kinase (265 aa).

Methionine 44 is a binding site for substrate. Positions 120 and 166 each coordinate ATP. Glycine 193 is a binding site for substrate.

The protein belongs to the Thz kinase family. Requires Mg(2+) as cofactor.

It catalyses the reaction 5-(2-hydroxyethyl)-4-methylthiazole + ATP = 4-methyl-5-(2-phosphooxyethyl)-thiazole + ADP + H(+). The protein operates within cofactor biosynthesis; thiamine diphosphate biosynthesis; 4-methyl-5-(2-phosphoethyl)-thiazole from 5-(2-hydroxyethyl)-4-methylthiazole: step 1/1. Catalyzes the phosphorylation of the hydroxyl group of 4-methyl-5-beta-hydroxyethylthiazole (THZ). The protein is Hydroxyethylthiazole kinase of Clostridium novyi (strain NT).